Consider the following 306-residue polypeptide: Recombination-associated protein RdgC (306 aa).

This sequence belongs to the RdgC family.

It localises to the cytoplasm. The protein localises to the nucleoid. May be involved in recombination. The chain is Recombination-associated protein RdgC from Pseudomonas syringae pv. tomato (strain ATCC BAA-871 / DC3000).